Here is a 493-residue protein sequence, read N- to C-terminus: Alpha-amylase-related protein (493 aa).

An N-terminal signal peptide occupies residues 1–19 (MFKFALTLTLCLAGSLSLA). Q20 carries the post-translational modification Pyrrolidone carboxylic acid. The cysteines at positions 47 and 103 are disulfide-linked. Ca(2+)-binding residues include N117, Q168, and D177. A disulfide bridge connects residues C156 and C170. R205 contacts chloride. The active-site Nucleophile is the D207. H211 is a Ca(2+) binding site. The active-site Proton donor is the E244. Positions 307 and 342 each coordinate chloride. 3 disulfide bridges follow: C375–C381, C417–C440, and C447–C459.

This sequence belongs to the glycosyl hydrolase 13 family. Monomer. The cofactor is Ca(2+). Requires chloride as cofactor.

It is found in the secreted. The enzyme catalyses Endohydrolysis of (1-&gt;4)-alpha-D-glucosidic linkages in polysaccharides containing three or more (1-&gt;4)-alpha-linked D-glucose units.. This chain is Alpha-amylase-related protein (Amyrel), found in Drosophila sechellia (Fruit fly).